Consider the following 394-residue polypeptide: Venom metalloproteinase antarease TserMP_A (394 aa).

The first 16 residues, 1–16 (MISYLASIFLLATVSA), serve as a signal peptide directing secretion. The propeptide occupies 17–157 (VPSGRVEVVF…NAENVSRMAR (141 aa)). The region spanning 162 to 391 (IVVEYYIVTD…PTASCIFQQC (230 aa)) is the Peptidase M12B domain. A disulfide bond links cysteine 295 and cysteine 386. Histidine 319 contributes to the Zn(2+) binding site. Glutamate 320 is an active-site residue. Histidine 323 and histidine 329 together coordinate Zn(2+).

The cofactor is Zn(2+). In terms of processing, contains 4 disulfide bonds. In terms of tissue distribution, expressed by the venom gland.

The protein localises to the secreted. Its activity is regulated as follows. Inhibited by EDTA. Functionally, acts as a metalloprotease. Penetrates intact tissue and specifically cleaves the vesicle-associated membrane protein 2 (VAMP2) (part of the SNARE complex) involved in pancreatic secretion, thus disrupting the normal vesicular traffic. This Tityus serrulatus (Brazilian scorpion) protein is Venom metalloproteinase antarease TserMP_A.